A 219-amino-acid chain; its full sequence is tRNA (guanine-N(7)-)-methyltransferase (219 aa).

Glutamate 51, glutamate 76, aspartate 103, and aspartate 125 together coordinate S-adenosyl-L-methionine. Residue aspartate 125 is part of the active site. Residues lysine 129, aspartate 161, and 199-202 (TRYE) contribute to the substrate site.

This sequence belongs to the class I-like SAM-binding methyltransferase superfamily. TrmB family.

It catalyses the reaction guanosine(46) in tRNA + S-adenosyl-L-methionine = N(7)-methylguanosine(46) in tRNA + S-adenosyl-L-homocysteine. It functions in the pathway tRNA modification; N(7)-methylguanine-tRNA biosynthesis. Its function is as follows. Catalyzes the formation of N(7)-methylguanine at position 46 (m7G46) in tRNA. The chain is tRNA (guanine-N(7)-)-methyltransferase from Hyphomonas neptunium (strain ATCC 15444).